Here is a 739-residue protein sequence, read N- to C-terminus: Glycine--tRNA ligase (739 aa).

The N-terminal 36 residues, Met1–Leu36, are a transit peptide targeting the mitochondrion. The residue at position 35 (Ser35) is a Phosphoserine. One can recognise a WHEP-TRS domain in the interval Val63–Val119. Lys204 bears the N6-acetyllysine mark. Glu299 contributes to the glycine binding site. Residues Arg331–Glu333 and Arg342–Val343 each bind ATP. Residue Glu350 participates in glycine binding. At Tyr453 the chain carries Phosphotyrosine. Position 457–458 (Glu457–Ile458) interacts with ATP. N6-acetyllysine is present on Lys501. Glu576–Ser578 contacts glycine. An ATP-binding site is contributed by Arg583. Ser700 is subject to Phosphoserine. Thr736 bears the Phosphothreonine mark.

This sequence belongs to the class-II aminoacyl-tRNA synthetase family. In terms of assembly, homodimer. In terms of tissue distribution, widely expressed, including in brain and spinal cord. Expressed in brain, spinal cord, muscle, heart and spleen. As to expression, expressed in brain, spinal cord, muscle, heart, spleen and liver.

The protein resides in the cytoplasm. The protein localises to the cell projection. It is found in the axon. It localises to the secreted. Its subcellular location is the extracellular exosome. The protein resides in the mitochondrion. It carries out the reaction tRNA(Gly) + glycine + ATP = glycyl-tRNA(Gly) + AMP + diphosphate. The enzyme catalyses 2 ATP + H(+) = P(1),P(4)-bis(5'-adenosyl) tetraphosphate + diphosphate. Its activity is regulated as follows. Ap4A synthesis is inhibited by tRNA, via the disruption of the second ATP-binding site by direct blocking and/or by tRNA-induced conformational change. Its function is as follows. Catalyzes the ATP-dependent ligation of glycine to the 3'-end of its cognate tRNA, via the formation of an aminoacyl-adenylate intermediate (Gly-AMP). Also produces diadenosine tetraphosphate (Ap4A), a universal pleiotropic signaling molecule needed for cell regulation pathways, by direct condensation of 2 ATPs. Thereby, may play a special role in Ap4A homeostasis. The sequence is that of Glycine--tRNA ligase from Homo sapiens (Human).